We begin with the raw amino-acid sequence, 85 residues long: Putative membrane protein insertion efficiency factor (85 aa).

Belongs to the UPF0161 family.

It is found in the cell inner membrane. Functionally, could be involved in insertion of integral membrane proteins into the membrane. This Vibrio atlanticus (strain LGP32) (Vibrio splendidus (strain Mel32)) protein is Putative membrane protein insertion efficiency factor.